Reading from the N-terminus, the 451-residue chain is MSIQSGEILETVKMVADQNFDVRTITIGIDLHDCISTDIDVLNQNIYNKITTVGKDLVATAKHLSAKYGVPIVNQRISVTPIAQIAAATKADSYVSVAQTLDKAAKAIGVSFIGGFSALVQKGMSPSDEVLIRSVPEAMKTTDIVCSSINIGSTRAGINMDAVKLAGETIKRTAEITPEGFGCAKIVVFCNAVEDNPFMAGAFHGSGEADAVINVGVSGPGVVKAALENSDAVSLTEVAEVVKKTAFKITRVGELIGREASKMLNIPFGILDLSLAPTPAVGDSVARILEEMGLSVCGTHGTTAALALLNDAVKKGGMMASSAVGGLSGAFIPVSEDEGMIAAAEAGVLTLDKLEAMTAVCSVGLDMIAVPGDTPAHTISGIIADEAAIGMINSKTTAVRIIPVTGKTVGDSVEFGGLLGYAPVMPAKEGSCEVFVNRGGRIPAPVQSMKN.

The protein belongs to the UPF0210 family. In terms of assembly, homodimer.

This chain is UPF0210 protein NGO_1297, found in Neisseria gonorrhoeae (strain ATCC 700825 / FA 1090).